A 162-amino-acid chain; its full sequence is NADH-quinone oxidoreductase subunit I (162 aa).

2 consecutive 4Fe-4S ferredoxin-type domains span residues 53–83 and 93–122; these read LRRY…IEAE and TRYD…EGPN. 8 residues coordinate [4Fe-4S] cluster: Cys63, Cys66, Cys69, Cys73, Cys102, Cys105, Cys108, and Cys112.

The protein belongs to the complex I 23 kDa subunit family. NDH-1 is composed of 14 different subunits. Subunits NuoA, H, J, K, L, M, N constitute the membrane sector of the complex. [4Fe-4S] cluster serves as cofactor.

The protein resides in the cell inner membrane. The catalysed reaction is a quinone + NADH + 5 H(+)(in) = a quinol + NAD(+) + 4 H(+)(out). NDH-1 shuttles electrons from NADH, via FMN and iron-sulfur (Fe-S) centers, to quinones in the respiratory chain. The immediate electron acceptor for the enzyme in this species is believed to be ubiquinone. Couples the redox reaction to proton translocation (for every two electrons transferred, four hydrogen ions are translocated across the cytoplasmic membrane), and thus conserves the redox energy in a proton gradient. This Granulibacter bethesdensis (strain ATCC BAA-1260 / CGDNIH1) protein is NADH-quinone oxidoreductase subunit I.